The chain runs to 188 residues: Achaete-scute homolog 5 (188 aa).

Positions 80-93 (AFIQKRNERERQRV) are basic motif. A bHLH domain is found at 80–132 (AFIQKRNERERQRVKCVNEGYARLRGHLPGALTEKRLSKVETLRAAIRYIKYL). A helix-loop-helix motif region spans residues 94-132 (KCVNEGYARLRGHLPGALTEKRLSKVETLRAAIRYIKYL). The disordered stretch occupies residues 139–188 (TPDGAPPPATSPPPAHTGHSNVPQPSSLVAESSGSPFSSSPFLESEEPSL). Residues 142 to 153 (GAPPPATSPPPA) show a composition bias toward pro residues. Polar residues predominate over residues 158 to 168 (SNVPQPSSLVA). The span at 169 to 181 (ESSGSPFSSSPFL) shows a compositional bias: low complexity.

As to quaternary structure, interacts with transcription factor TCF3/E12. Expressed in teeth (at protein level).

It is found in the nucleus. Functionally, transcription factor. Probably binds E-box motifs 5'-CANNTG-3' in complex with transcription factor TCF3/E12. Negatively modulates transcription of target genes such as CDH1/E-cadherin, perhaps by recruiting the PRC2 repressive complex to regulatory elements. Regulates ameloblast development and tooth germ growth, perhaps acting by positively modulating migration of inner enamel epithelium (IEE) cells. Plays a role in enamel formation. In Mus musculus (Mouse), this protein is Achaete-scute homolog 5.